A 458-amino-acid chain; its full sequence is Peptidyl-prolyl cis-trans isomerase FKBP4 (458 aa).

At Met-1 the chain carries N-acetylmethionine; in peptidyl-prolyl cis-trans isomerase FKBP4; alternate. Position 2 is an N-acetylthreonine; in peptidyl-prolyl cis-trans isomerase FKBP4, N-terminally processed; partial (Thr-2). One can recognise a PPIase FKBP-type 1 domain in the interval 50–138 (GDRVFVHYTG…VFEVELFEFK (89 aa)). Position 143 is a phosphothreonine; by CK2 (Thr-143). Residues 167–253 (GAMVEVALEG…RYEVHLKSFE (87 aa)) form the PPIase FKBP-type 2 domain. Tyr-220 carries the phosphotyrosine modification. Residues 267 to 400 (LEQSNIVKER…TQLAVCQQRT (134 aa)) are interaction with tubulin. TPR repeat units follow at residues 270–303 (SNIVKERGTVYFKEGKYKQALLQYKKIVSWLEYE), 319–352 (LASHLNLAMCHLKLQAFSAAIESCNKALELDSNN), and 353–386 (EKGLFRRGEAHLAVNDFDLARADFQKVLQLYPSN). Lys-282 is modified (N6-acetyllysine). Arg-373 bears the Omega-N-methylarginine mark. The interval 423 to 458 (HKAKTEVAAGDHPTDAEMKGEPNNVAGNQAQVKTEA) is disordered. Thr-436 bears the Phosphothreonine mark. Lys-441 participates in a covalent cross-link: Glycyl lysine isopeptide (Lys-Gly) (interchain with G-Cter in SUMO1). Over residues 447–458 (VAGNQAQVKTEA) the composition is skewed to polar residues.

As to quaternary structure, homodimer. Interacts with GLMN. Associates with HSP90AA1 and HSP70 in steroid hormone receptor complexes. Also interacts with peroxisomal phytanoyl-CoA alpha-hydroxylase (PHYH). Interacts with NR3C1 and dynein. Interacts with HSF1 in the HSP90 complex. Associates with tubulin. Interacts with MAPT/TAU. Interacts (via TPR domain) with S100A1, S100A2 and S100A6; the interaction is Ca(2+) dependent. Interaction with S100A1 and S100A2 (but not with S100A6) leads to inhibition of FKBP4-HSP90 interaction. Interacts with dynein; causes partially NR3C1 transport to the nucleus. In terms of processing, phosphorylation by CK2 results in loss of HSP90 binding activity. In terms of tissue distribution, widely detected in the brain (at protein level).

The protein localises to the cytoplasm. It localises to the cytosol. It is found in the mitochondrion. The protein resides in the nucleus. Its subcellular location is the cytoskeleton. The protein localises to the cell projection. It localises to the axon. It carries out the reaction [protein]-peptidylproline (omega=180) = [protein]-peptidylproline (omega=0). With respect to regulation, inhibited by FK506. Its function is as follows. Immunophilin protein with PPIase and co-chaperone activities. Component of unligated steroid receptors heterocomplexes through interaction with heat-shock protein 90 (HSP90). Plays a role in the intracellular trafficking of heterooligomeric forms of steroid hormone receptors between cytoplasm and nuclear compartments. May have a protective role against oxidative stress in mitochondria. Also acts as a regulator of microtubule dynamics by inhibiting MAPT/TAU ability to promote microtubule assembly. The PPIase activity controls neuronal growth cones via regulation of TRPC1 channel opening. This chain is Peptidyl-prolyl cis-trans isomerase FKBP4 (Fkbp4), found in Rattus norvegicus (Rat).